The chain runs to 239 residues: Pyridoxine 5'-phosphate synthase (239 aa).

N7 provides a ligand contact to 3-amino-2-oxopropyl phosphate. A 1-deoxy-D-xylulose 5-phosphate-binding site is contributed by 9–10 (DH). R18 is a 3-amino-2-oxopropyl phosphate binding site. Catalysis depends on H43, which acts as the Proton acceptor. The 1-deoxy-D-xylulose 5-phosphate site is built by R45 and H50. The active-site Proton acceptor is the E70. T100 serves as a coordination point for 1-deoxy-D-xylulose 5-phosphate. H191 functions as the Proton donor in the catalytic mechanism. 3-amino-2-oxopropyl phosphate is bound by residues G192 and 213–214 (GH).

It belongs to the PNP synthase family. Homooctamer; tetramer of dimers.

The protein resides in the cytoplasm. It carries out the reaction 3-amino-2-oxopropyl phosphate + 1-deoxy-D-xylulose 5-phosphate = pyridoxine 5'-phosphate + phosphate + 2 H2O + H(+). It functions in the pathway cofactor biosynthesis; pyridoxine 5'-phosphate biosynthesis; pyridoxine 5'-phosphate from D-erythrose 4-phosphate: step 5/5. Catalyzes the complicated ring closure reaction between the two acyclic compounds 1-deoxy-D-xylulose-5-phosphate (DXP) and 3-amino-2-oxopropyl phosphate (1-amino-acetone-3-phosphate or AAP) to form pyridoxine 5'-phosphate (PNP) and inorganic phosphate. The protein is Pyridoxine 5'-phosphate synthase of Desulforapulum autotrophicum (strain ATCC 43914 / DSM 3382 / VKM B-1955 / HRM2) (Desulfobacterium autotrophicum).